Consider the following 78-residue polypeptide: Large ribosomal subunit protein uL24 (78 aa).

The protein belongs to the universal ribosomal protein uL24 family. As to quaternary structure, part of the 50S ribosomal subunit.

Its function is as follows. One of two assembly initiator proteins, it binds directly to the 5'-end of the 23S rRNA, where it nucleates assembly of the 50S subunit. Functionally, one of the proteins that surrounds the polypeptide exit tunnel on the outside of the subunit. This chain is Large ribosomal subunit protein uL24, found in Campylobacter curvus (strain 525.92).